A 93-amino-acid chain; its full sequence is Muconolactone Delta-isomerase (93 aa).

This sequence belongs to the muconolactone Delta-isomerase family. Homodecamer.

The enzyme catalyses (S)-muconolactone = (4,5-dihydro-5-oxofuran-2-yl)-acetate. Its pathway is aromatic compound metabolism; beta-ketoadipate pathway; 5-oxo-4,5-dihydro-2-furylacetate from catechol: step 3/3. The protein is Muconolactone Delta-isomerase (catC) of Rhodococcus opacus (Nocardia opaca).